The following is a 98-amino-acid chain: RNA-binding protein Hfq (98 aa).

Residues Asp11 to Val71 form the Sm domain.

This sequence belongs to the Hfq family. Homohexamer.

Its function is as follows. RNA chaperone that binds small regulatory RNA (sRNAs) and mRNAs to facilitate mRNA translational regulation in response to envelope stress, environmental stress and changes in metabolite concentrations. Also binds with high specificity to tRNAs. The polypeptide is RNA-binding protein Hfq (Gluconacetobacter diazotrophicus (strain ATCC 49037 / DSM 5601 / CCUG 37298 / CIP 103539 / LMG 7603 / PAl5)).